The chain runs to 414 residues: Secernin-1 (414 aa).

The protein belongs to the peptidase C69 family. Secernin subfamily.

Its subcellular location is the cytoplasm. Regulates exocytosis in mast cells. Increases both the extent of secretion and the sensitivity of mast cells to stimulation with calcium. In Rattus norvegicus (Rat), this protein is Secernin-1 (Scrn1).